The sequence spans 461 residues: Argininosuccinate lyase (461 aa).

The protein belongs to the lyase 1 family. Argininosuccinate lyase subfamily.

It is found in the cytoplasm. The catalysed reaction is 2-(N(omega)-L-arginino)succinate = fumarate + L-arginine. The protein operates within amino-acid biosynthesis; L-arginine biosynthesis; L-arginine from L-ornithine and carbamoyl phosphate: step 3/3. The chain is Argininosuccinate lyase from Dehalococcoides mccartyi (strain ATCC BAA-2100 / JCM 16839 / KCTC 5957 / BAV1).